The primary structure comprises 191 residues: Gamma-glutamylaminecyclotransferase B (191 aa).

7 to 10 provides a ligand contact to substrate; it reads YGTL. Glutamate 82 serves as the catalytic Proton acceptor. Over residues 155–178 the composition is skewed to polar residues; sequence SADFSQNSEQEIKKNNSLQILTST. Residues 155 to 191 are disordered; that stretch reads SADFSQNSEQEIKKNNSLQILTSTGDDHDVNFRGPLQ.

Belongs to the gamma-glutamylcyclotransferase family.

The enzyme catalyses epsilon-(gamma-L-glutamyl)-L-lysine = 5-oxo-L-proline + L-lysine. In terms of biological role, may contribute to degradation of proteins cross-linked by transglutaminases by degrading the cross-link between a lysine and a glutamic acid residue. Catalyzes the formation of 5-oxo-L-proline from L-gamma-glutamyl-L-epsilon-lysine. The polypeptide is Gamma-glutamylaminecyclotransferase B (ggact.2) (Danio rerio (Zebrafish)).